The sequence spans 331 residues: Tetraacyldisaccharide 4'-kinase (331 aa).

Residue 60-67 participates in ATP binding; sequence TIGGTGKT.

This sequence belongs to the LpxK family.

It carries out the reaction a lipid A disaccharide + ATP = a lipid IVA + ADP + H(+). It participates in glycolipid biosynthesis; lipid IV(A) biosynthesis; lipid IV(A) from (3R)-3-hydroxytetradecanoyl-[acyl-carrier-protein] and UDP-N-acetyl-alpha-D-glucosamine: step 6/6. Functionally, transfers the gamma-phosphate of ATP to the 4'-position of a tetraacyldisaccharide 1-phosphate intermediate (termed DS-1-P) to form tetraacyldisaccharide 1,4'-bis-phosphate (lipid IVA). This Pseudomonas syringae pv. tomato (strain ATCC BAA-871 / DC3000) protein is Tetraacyldisaccharide 4'-kinase.